We begin with the raw amino-acid sequence, 217 residues long: N-(5'-phosphoribosyl)anthranilate isomerase (217 aa).

It belongs to the TrpF family.

It catalyses the reaction N-(5-phospho-beta-D-ribosyl)anthranilate = 1-(2-carboxyphenylamino)-1-deoxy-D-ribulose 5-phosphate. It functions in the pathway amino-acid biosynthesis; L-tryptophan biosynthesis; L-tryptophan from chorismate: step 3/5. This chain is N-(5'-phosphoribosyl)anthranilate isomerase, found in Synechococcus elongatus (strain ATCC 33912 / PCC 7942 / FACHB-805) (Anacystis nidulans R2).